The chain runs to 160 residues: S-ribosylhomocysteine lyase (160 aa).

Fe cation contacts are provided by His57, His61, and Cys127.

Belongs to the LuxS family. Homodimer. Fe cation serves as cofactor.

It carries out the reaction S-(5-deoxy-D-ribos-5-yl)-L-homocysteine = (S)-4,5-dihydroxypentane-2,3-dione + L-homocysteine. Involved in the synthesis of autoinducer 2 (AI-2) which is secreted by bacteria and is used to communicate both the cell density and the metabolic potential of the environment. The regulation of gene expression in response to changes in cell density is called quorum sensing. Catalyzes the transformation of S-ribosylhomocysteine (RHC) to homocysteine (HC) and 4,5-dihydroxy-2,3-pentadione (DPD). This is S-ribosylhomocysteine lyase from Streptococcus sanguinis (strain SK36).